A 160-amino-acid polypeptide reads, in one-letter code: uncharacterized protein (160 aa).

Residues 1 to 31 show a composition bias toward basic and acidic residues; that stretch reads METEKPNTDVKVAQDLEKLKLDEKHKDEKKD. The disordered stretch occupies residues 1–160; sequence METEKPNTDV…DKKDKEHKKE (160 aa). The stretch at 20 to 111 forms a coiled coil; that stretch reads KLDEKHKDEK…KSKLEGKKDK (92 aa). Residues 32–42 are compositionally biased toward basic residues; it reads KKDKKDKKDKK. The segment covering 43 to 160 has biased composition (basic and acidic residues); sequence DKKEKTPEEI…DKKDKEHKKE (118 aa).

This is an uncharacterized protein from Dictyostelium discoideum (Social amoeba).